We begin with the raw amino-acid sequence, 153 residues long: Aspartate carbamoyltransferase regulatory chain (153 aa).

The Zn(2+) site is built by C110, C115, C138, and C141.

It belongs to the PyrI family. In terms of assembly, contains catalytic and regulatory chains. It depends on Zn(2+) as a cofactor.

Functionally, involved in allosteric regulation of aspartate carbamoyltransferase. This Bacteroides fragilis (strain ATCC 25285 / DSM 2151 / CCUG 4856 / JCM 11019 / LMG 10263 / NCTC 9343 / Onslow / VPI 2553 / EN-2) protein is Aspartate carbamoyltransferase regulatory chain.